The sequence spans 62 residues: Large ribosomal subunit protein uL30 (62 aa).

The protein belongs to the universal ribosomal protein uL30 family. Part of the 50S ribosomal subunit.

The protein is Large ribosomal subunit protein uL30 of Polynucleobacter asymbioticus (strain DSM 18221 / CIP 109841 / QLW-P1DMWA-1) (Polynucleobacter necessarius subsp. asymbioticus).